The sequence spans 264 residues: 3-methyl-2-oxobutanoate hydroxymethyltransferase (264 aa).

Residues Asp-45 and Asp-84 each coordinate Mg(2+). Residues 45–46, Asp-84, and Lys-112 each bind 3-methyl-2-oxobutanoate; that span reads DS. Residue Glu-114 coordinates Mg(2+). Glu-181 serves as the catalytic Proton acceptor.

The protein belongs to the PanB family. In terms of assembly, homodecamer; pentamer of dimers. The cofactor is Mg(2+).

The protein resides in the cytoplasm. It carries out the reaction 3-methyl-2-oxobutanoate + (6R)-5,10-methylene-5,6,7,8-tetrahydrofolate + H2O = 2-dehydropantoate + (6S)-5,6,7,8-tetrahydrofolate. Its pathway is cofactor biosynthesis; (R)-pantothenate biosynthesis; (R)-pantoate from 3-methyl-2-oxobutanoate: step 1/2. Functionally, catalyzes the reversible reaction in which hydroxymethyl group from 5,10-methylenetetrahydrofolate is transferred onto alpha-ketoisovalerate to form ketopantoate. The protein is 3-methyl-2-oxobutanoate hydroxymethyltransferase of Aeromonas salmonicida (strain A449).